The sequence spans 146 residues: Hemoglobin subunit beta (146 aa).

Valine 1 bears the N-acetylvaline mark. Residues 2–146 enclose the Globin domain; sequence HLTADEKAAV…VATALAHKYH (145 aa). Residue threonine 12 is modified to Phosphothreonine. A Phosphoserine modification is found at serine 44. N6-acetyllysine is present on lysine 59. Heme b is bound at residue histidine 63. Residue lysine 82 is modified to N6-acetyllysine. Histidine 92 contributes to the heme b binding site. Cysteine 93 carries the S-nitrosocysteine modification. Lysine 144 carries the post-translational modification N6-acetyllysine.

The protein belongs to the globin family. As to quaternary structure, heterotetramer of two alpha chains and two beta chains. As to expression, red blood cells.

Its function is as follows. Involved in oxygen transport from the lung to the various peripheral tissues. In Taphozous georgianus (Sharp-nosed tomb bat), this protein is Hemoglobin subunit beta (HBB).